Reading from the N-terminus, the 467-residue chain is A-type ATP synthase subunit B (467 aa).

Residues 95–114 (GKGQPRDHMPLPPPEDFRDV) form a disordered region.

Belongs to the ATPase alpha/beta chains family. As to quaternary structure, has multiple subunits with at least A(3), B(3), C, D, E, F, H, I and proteolipid K(x).

It localises to the cell membrane. Component of the A-type ATP synthase that produces ATP from ADP in the presence of a proton gradient across the membrane. The B chain is a regulatory subunit. This is A-type ATP synthase subunit B from Pyrobaculum neutrophilum (strain DSM 2338 / JCM 9278 / NBRC 100436 / V24Sta) (Thermoproteus neutrophilus).